A 245-amino-acid polypeptide reads, in one-letter code: Probable phosphatase YpAngola_A2446 (245 aa).

Residues histidine 7, histidine 9, histidine 15, histidine 40, glutamate 73, histidine 101, histidine 131, aspartate 192, and histidine 194 each contribute to the Zn(2+) site.

The protein belongs to the PHP family. Homotrimer. Zn(2+) is required as a cofactor.

This is Probable phosphatase YpAngola_A2446 from Yersinia pestis bv. Antiqua (strain Angola).